The sequence spans 335 residues: AA9 family lytic polysaccharide monooxygenase A (335 aa).

The first 21 residues, 1-21 (MSSFITKTVLAALVAAAGVRA), serve as a signal peptide directing secretion. Residues histidine 22 and histidine 107 each contribute to the Cu(2+) site. Cysteine 77 and cysteine 196 are oxidised to a cystine. 2 residues coordinate O2: histidine 182 and glutamine 191. Position 193 (tyrosine 193) interacts with Cu(2+). The tract at residues 241-335 (PKMNIAGGSS…ARRHARDMMN (95 aa)) is disordered. The span at 251–303 (GAAPSTPATPTTGSGSDTPSNTAAPVESAPAESAAPVESAPAAGNGNQNNGGA) shows a compositional bias: low complexity. A compositionally biased stretch (basic residues) spans 321–335 (CKAKKARRHARDMMN).

This sequence belongs to the polysaccharide monooxygenase AA9 family. It depends on Cu(2+) as a cofactor.

It localises to the secreted. The catalysed reaction is [(1-&gt;4)-beta-D-glucosyl]n+m + reduced acceptor + O2 = 4-dehydro-beta-D-glucosyl-[(1-&gt;4)-beta-D-glucosyl]n-1 + [(1-&gt;4)-beta-D-glucosyl]m + acceptor + H2O.. Its function is as follows. Lytic polysaccharide monooxygenase (LPMO) that depolymerizes crystalline and amorphous polysaccharides via the oxidation of scissile alpha- or beta-(1-4)-glycosidic bonds, yielding C1 or C4 oxidation products. Catalysis by LPMOs requires the reduction of the active-site copper from Cu(II) to Cu(I) by a reducing agent and H(2)O(2) or O(2) as a cosubstrate. Is capable of cleaving cellulose, but not chitin. Is also active on tamarind xyloglucan and longer xyloglucan oligosaccharides. Has no activity toward shorter cellooligosaccharides (Glc3-6), as well as toward the xyloglucan-heptamer, birchwood xylan, wheat arabinoxylan, konjac glucomannan, ivory nut mannan, beta-glucan from barley, lichenan from Icelandic moss, starch, and spruce galactoglucomannan. Has unprecedented broad specificity on xyloglucan, cleaving any glycosidicbond in theb-glucan main chain, regardless of xylosyl substitutions. When incubated with a mixture of xyloglucan and cellulose, efficiently attacks the xyloglucan, whereas cellulose conversion is inhibited, suggesting that removal of hemicellulose may be the true function of this LPMO during biomass conversion. In Gibberella zeae (strain ATCC MYA-4620 / CBS 123657 / FGSC 9075 / NRRL 31084 / PH-1) (Wheat head blight fungus), this protein is AA9 family lytic polysaccharide monooxygenase A.